We begin with the raw amino-acid sequence, 386 residues long: MSSTRSPLKTKNENTISTKMNNMSFVDKENTPPSLSSTRILASKTARKIFDESEGQSKAKKGAVEEEPLLKENPHRFVIFPIQYHDIWQMYKKAEASFWTAEEVDLSKDLQHWDSLKDEERYFISHVLAFFAASDGIVNENLVERFTQEVQVTEARCFYGFQIAMENIHSEMYSLLIDTYIKDSKEREFLFNAIETMPCVKKKADWALNWIGDKNARYGERVVAFAAVEGIFFSGSFASIFWLKKRGLMPGLTFSNELISRDEGLHCDFACLMFKHLINKPSEETVKKIIMNAVEIEQEFLTDALPVKLIGMNCDLMKQYIEFVADRLLLELGFDKVYRVENPFDFMENISLEGKTNFFEKRVGEYQRMGVMSGTTDNTFTLDADF.

The segment covering 1 to 24 has biased composition (polar residues); that stretch reads MSSTRSPLKTKNENTISTKMNNMS. The interval 1–36 is disordered; that stretch reads MSSTRSPLKTKNENTISTKMNNMSFVDKENTPPSLS. S6 is modified (phosphoserine). T31 bears the Phosphothreonine mark. Fe cation-binding residues include D135, E166, and H169. Y173 is a catalytic residue. 3 residues coordinate Fe cation: E229, E263, and H266.

Belongs to the ribonucleoside diphosphate reductase small chain family. Heterodimer of a large and a small subunit. It depends on Fe cation as a cofactor.

The protein localises to the cytoplasm. The enzyme catalyses a 2'-deoxyribonucleoside 5'-diphosphate + [thioredoxin]-disulfide + H2O = a ribonucleoside 5'-diphosphate + [thioredoxin]-dithiol. Its function is as follows. Provides the precursors necessary for DNA synthesis. Catalyzes the biosynthesis of deoxyribonucleotides from the corresponding ribonucleotides. The protein is Ribonucleoside-diphosphate reductase subunit M2 (rrm2) of Danio rerio (Zebrafish).